Consider the following 338-residue polypeptide: Secretory carrier-associated membrane protein 1 (338 aa).

The tract at residues 1-64 (MSDFDSNPFA…NVPNTQPAIM (64 aa)) is disordered. N-acetylserine is present on Ser2. Ser2 is subject to Phosphoserine. The Cytoplasmic segment spans residues 2 to 155 (SDFDSNPFAD…QKTVKLMYYL (154 aa)). Thr45 carries the post-translational modification Phosphothreonine. Residues 156–176 (WMFHAVTLFLNIFGCLAWFCV) form a helical membrane-spanning segment. Residues 177–181 (DSARA) lie on the Lumenal side of the membrane. A helical membrane pass occupies residues 182–202 (VDFGLSILWFLLFTPCSFVCW). Residues 203–218 (YRPLYGAFRSDSSFRF) are Cytoplasmic-facing. A helical transmembrane segment spans residues 219–239 (FVFFFVYICQFAVHVLQAAGF). Residues 240–261 (HNWGNCGWISSLTGLNQNIPVG) are Lumenal-facing. A helical membrane pass occupies residues 262–282 (IMMIIIAALFTASAVISLVMF). Residues 283–338 (KKVHGLYRTTGASFEKAQQEFATGVMSNKTVQTAAANAASTAASSAAQNAFKGNQI) are Cytoplasmic-facing.

This sequence belongs to the SCAMP family. As to quaternary structure, interacts with SYNRG and ITSN1. Interacts with SLC9A7. As to expression, widely expressed, with highest expression in brain.

The protein resides in the golgi apparatus. It is found in the trans-Golgi network membrane. The protein localises to the recycling endosome membrane. Functions in post-Golgi recycling pathways. Acts as a recycling carrier to the cell surface. This chain is Secretory carrier-associated membrane protein 1 (SCAMP1), found in Homo sapiens (Human).